The primary structure comprises 265 residues: Putative hydro-lyase PST_2764 (265 aa).

It belongs to the D-glutamate cyclase family.

The protein is Putative hydro-lyase PST_2764 of Stutzerimonas stutzeri (strain A1501) (Pseudomonas stutzeri).